A 588-amino-acid chain; its full sequence is Disabled homolog 1 (588 aa).

The tract at residues 1–26 is disordered; that stretch reads MSTETELQVAVKTSAKKDSRKKGQDR. Over residues 15–26 the composition is skewed to basic and acidic residues; the sequence is AKKDSRKKGQDR. Residues 36-189 enclose the PID domain; sequence KGEGVRYKAK…CEQAVYQTIL (154 aa). Phosphotyrosine is present on residues Y198, Y220, and Y232. Disordered stretches follow at residues 417–443, 451–470, and 502–588; these read LTPL…RQKM, FQMA…PSLT, and LTPV…QAGS. Over residues 424–436 the composition is skewed to polar residues; sequence PGTSDSTRSSPQT. 2 stretches are compositionally biased toward low complexity: residues 503–512 and 520–534; these read TPVTSTTPST and PRQS…SHAS. Residue S524 is modified to Phosphoserine; by CDK5. Over residues 537–546 the composition is skewed to acidic residues; it reads TTDDIFEEGF.

As to quaternary structure, associates with the SH2 domains of SRC, FYN and ABL. Interacts (phosphorylated on tyrosine residues) with CRK and CRKL (via respective SH2 domain). Interacts with SIAH1, LRP8 and VLDLR. Interacts with LRP1. Interacts with APLP1 (via NPXY motif). Interacts with DAB2IP. Interacts with ZSWIM8. Phosphorylated by FYN on Tyr-198 and Tyr-220 upon reelin induction in embryonic neurons. Also phosphorylated on Ser-524 independently of reelin signaling. In terms of processing, ubiquitinated by various cullin-5-RING E3 ubiquitin-protein ligase complexes (ECS complexes) following ligand-binding and phosphorylation, leading to its degradation. Ubiquitinated by the ECS(SOCS7) complex in the cortical plate of the developing cerebral cortex following ligand-binding and phosphorylation by FYN, leading to its degradation by the proteasome. Recognized by ZSWIM8 through a disorder targets misorder mechanism that eliminates misfolded DAB1 via ubiquitination and proteasomal degradation. As to expression, mainly expressed in brain.

Its subcellular location is the cytoplasm. Functionally, signaling adapter of the reelin-mediated signaling pathway, which regulates the migration and differentiation of postmitotic neurons during brain development. Mediates intracellular transduction of Reelin signaling following reelin (RELN)-binding to its receptor: acts by docking proteins through its phosphotyrosine residues and PID domain. The polypeptide is Disabled homolog 1 (DAB1) (Homo sapiens (Human)).